Consider the following 303-residue polypeptide: Recombination-associated protein RdgC (303 aa).

This sequence belongs to the RdgC family.

It is found in the cytoplasm. The protein resides in the nucleoid. Functionally, may be involved in recombination. The protein is Recombination-associated protein RdgC of Shewanella frigidimarina (strain NCIMB 400).